Consider the following 546-residue polypeptide: Chaperonin GroEL (546 aa).

ATP-binding positions include 29-32 (TMGP), lysine 50, 86-90 (DGTTT), glycine 414, and aspartate 492.

This sequence belongs to the chaperonin (HSP60) family. In terms of assembly, forms a cylinder of 14 subunits composed of two heptameric rings stacked back-to-back. Interacts with the co-chaperonin GroES.

The protein resides in the cytoplasm. The enzyme catalyses ATP + H2O + a folded polypeptide = ADP + phosphate + an unfolded polypeptide.. In terms of biological role, together with its co-chaperonin GroES, plays an essential role in assisting protein folding. The GroEL-GroES system forms a nano-cage that allows encapsulation of the non-native substrate proteins and provides a physical environment optimized to promote and accelerate protein folding. This Helicobacter pylori (strain HPAG1) protein is Chaperonin GroEL.